The primary structure comprises 2016 residues: Cell adhesion molecule Dscam1 (2016 aa).

The signal sequence occupies residues 1–28; that stretch reads MNMPNERLKWLMLFAAVALIACGSQTLA. Over 29–1618 the chain is Extracellular; the sequence is ANPPDADQKG…TIRIILSNLN (1590 aa). 9 consecutive Ig-like C2-type domains span residues 39 to 134, 138 to 230, 247 to 338, 342 to 421, 428 to 522, 527 to 613, 618 to 712, 715 to 807, and 812 to 904; these read PVFL…VHVR, AQYY…TRLS, PKIN…TVLT, PLSA…AELK, PPVI…AKLN, PYIR…LEVQ, PQVL…LQVN, PRWI…IMIS, and PEFT…ASIN. Residue asparagine 53 is glycosylated (N-linked (GlcNAc...) asparagine). A disulfide bond links cysteine 61 and cysteine 117. Residues aspartate 144, asparagine 146, and leucine 161 each coordinate Zn(2+). Cystine bridges form between cysteine 160–cysteine 217, cysteine 160–threonine 219, cysteine 160–lysine 220, cysteine 269–cysteine 322, proline 270–valine 323, alanine 276–glycine 329, cysteine 364–cysteine 405, cysteine 450–cysteine 506, cysteine 547–cysteine 596, cysteine 640–cysteine 694, valine 641–cysteine 694, valine 641–isoleucine 695, and cysteine 736–cysteine 790. Asparagine 325 is a glycosylation site (N-linked (GlcNAc...) asparagine). N-linked (GlcNAc...) asparagine glycosylation is found at asparagine 492 and asparagine 577. N-linked (GlcNAc...) asparagine glycosylation is present at asparagine 820. Cysteine 833 and cysteine 890 form a disulfide bridge. 4 Fibronectin type-III domains span residues 913 to 1007, 1012 to 1116, 1117 to 1213, and 1217 to 1310; these read MPYA…TAEE, KPQN…TPSQ, PPSD…TEPD, and APTD…PSDQ. Residues asparagine 1022, asparagine 1055, and asparagine 1186 are each glycosylated (N-linked (GlcNAc...) asparagine). In terms of domain architecture, Ig-like C2-type 10 spans 1312–1394; it reads PAKIASFDDT…ENSIAKDSIT (83 aa). Cysteine 1334 and cysteine 1382 form a disulfide bridge. 2 Fibronectin type-III domains span residues 1402-1495 and 1499-1594; these read PPQS…TKGQ and LPEK…TGGT. A helical membrane pass occupies residues 1619–1639; sequence LVVPVVAALLVIIIAIIVICI. At 1640 to 2016 the chain is on the cytoplasmic side; the sequence is LRSKGNHHKD…GFTAYDTMAV (377 aa). Positions 1685–1688 match the PXXP motif 1; SH3-binding motif; it reads PPVP. The segment at 1688 to 1719 is disordered; it reads PGSNYNTCDRIKRGRGGLRSNHSTWDPRRNPN. The PXXP motif 2; SH3-binding motif lies at 1727–1730; the sequence is PPVP. Disordered regions lie at residues 1787–1846 and 1862–2016; these read GHAG…DDPA and SQGG…TMAV. Positions 1826–1836 are enriched in polar residues; the sequence is KNSQGGQSSIY. A YXXP motif 1; potential SH2-binding motif is present at residues 1842 to 1845; that stretch reads YDDP. The YXXP motif 2; potential SH2-binding signature appears at 1875 to 1878; the sequence is YDDP. Positions 1897 to 1918 are enriched in low complexity; it reads GQPYDHYGSRGSMGRRSIGSAR. The Polyproline tract (probable SH3-binding) motif lies at 1925-1932; it reads PEPPPPPP. 2 stretches are compositionally biased toward basic and acidic residues: residues 1944 to 1962 and 1974 to 1993; these read DSKE…DHGP and QPKD…RNET. Over residues 1994-2004 the composition is skewed to polar residues; the sequence is GPKQLQLQQAN.

Homodimer (via extracellular region); alternative splicing produces a potential 19,008 different ectodomains and the majority of these show strong isoform-specific homodimerization. Interacts (via cytoplasmic domain) with dock/dreadlocks (via SH2 and SH3 domains); the interaction is direct and may require Dscam1 to be phosphorylated. Phosphorylated on tyrosine residues in the intracellular domain. Tyrosine protein kinase Src42A and possibly Src64B are involved in this phosphorylation. Post-translationally, glycosylation on Asn-53 and Asn-325 is involved in stabilizing dimerization. In terms of processing, proteolytically processed, probably to generate a secreted form. In terms of tissue distribution, secreted into the hemolymph (at protein level). Expressed in brain and eye-antennal imaginal disks, including R3/R4 and R7 photoreceptor cells. Individual R3/R4 cells express between 14 and 50 randomly generated mRNAs encoding distinct isoforms.

The protein resides in the cell membrane. Its subcellular location is the cell projection. It localises to the neuron projection. It is found in the axon. The protein localises to the perikaryon. The protein resides in the dendrite. Its subcellular location is the secreted. Cell surface receptor involved in guidance and targeting of growing nerve axons. Required during Bolwig's organ differentiation for accurate and efficient targeting of photoreceptor neuron axons to their synaptic targets in the brain via the P2 intermediate target neuron. Involved in isoneural self-avoidance during dendrite arborization but not in heteroneural recognition and repulsion during tiling by related neurons of the same class. Involved in regulating axon bifurcation and divergent extension in the developing mushroom body. Essential for axon arborisation in ellipsoid body. Exhibits an extraordinary level of molecular diversity resulting from alternative splicing. Isoforms differing in their ectodomain makeup show a high degree of functional redundancy while isoforms with different transmembrane domains are involved in different neuronal morphogenetic processes and are differentially targeted to dendrites or axons. The vast majority of isoforms exhibit strong isoform-specific homophilic binding. Individual cells express a distinct randomly generated repertoire of isoforms. Cell surfaces bearing identical repertoires of Dscam1 isoforms, such as those from the same cell, trigger recognition and avoidance. A subset of isoforms is expressed in fat body cells and hemocytes, cells that are part of the insect immune response, and these isoforms are secreted into the hemolymph. The secreted form comprising the ectodomain can bind to bacteria, such as Escherichia coli, and may act as an opsonin enhancing their phagocytosis by hemocytes. The protein is Cell adhesion molecule Dscam1 of Drosophila melanogaster (Fruit fly).